We begin with the raw amino-acid sequence, 326 residues long: Transmembrane protein PVRIG (326 aa).

The next 3 membrane-spanning stretches (helical) occupy residues 26-46 (LVLPWVLLTLCVTAGTPEVWV), 62-78 (CGFLGSGSISLVTVSWG), and 172-192 (LAGILGVSGVLLFGCVYLLHL). A Phosphotyrosine modification is found at tyrosine 233. The segment at 296-326 (AGERPPHTGPGLTLFPDPRGPRAMEGPLGVR) is disordered.

As to quaternary structure, interacts with NECTIN2, hence competing with CD226. Expressed in some types of immune cells. Expressed at low levels on the surface of freshly isolated T-cells and natural killer (NK) cells, predominantly on CD8+ T-cells (mainly memory/effector, but not naive cells) and on both CD16+ and CD16- NK cells. T-cell expression levels are variable among individuals. Not detected in B-cells, naive or helper T-cells, monocytes, nor neutrophils (at protein level). Not detected in dendritic cells.

It is found in the cell membrane. Its function is as follows. Cell surface receptor for NECTIN2. May act as a coinhibitory receptor that suppresses T-cell receptor-mediated signals. Following interaction with NECTIN2, inhibits T-cell proliferation. Competes with CD226 for NECTIN2-binding. In Homo sapiens (Human), this protein is Transmembrane protein PVRIG (PVRIG).